A 372-amino-acid polypeptide reads, in one-letter code: Queuine tRNA-ribosyltransferase (372 aa).

D92 functions as the Proton acceptor in the catalytic mechanism. Substrate contacts are provided by residues 92–96 (DSGGY), D146, Q188, and G215. The segment at 246–252 (GIGTIRE) is RNA binding. D265 (nucleophile) is an active-site residue. Positions 270–274 (TRLGR) are RNA binding; important for wobble base 34 recognition. The Zn(2+) site is built by C303, C305, C308, and H334.

Belongs to the queuine tRNA-ribosyltransferase family. In terms of assembly, homodimer. Within each dimer, one monomer is responsible for RNA recognition and catalysis, while the other monomer binds to the replacement base PreQ1. The cofactor is Zn(2+).

It carries out the reaction 7-aminomethyl-7-carbaguanine + guanosine(34) in tRNA = 7-aminomethyl-7-carbaguanosine(34) in tRNA + guanine. Its pathway is tRNA modification; tRNA-queuosine biosynthesis. Catalyzes the base-exchange of a guanine (G) residue with the queuine precursor 7-aminomethyl-7-deazaguanine (PreQ1) at position 34 (anticodon wobble position) in tRNAs with GU(N) anticodons (tRNA-Asp, -Asn, -His and -Tyr). Catalysis occurs through a double-displacement mechanism. The nucleophile active site attacks the C1' of nucleotide 34 to detach the guanine base from the RNA, forming a covalent enzyme-RNA intermediate. The proton acceptor active site deprotonates the incoming PreQ1, allowing a nucleophilic attack on the C1' of the ribose to form the product. After dissociation, two additional enzymatic reactions on the tRNA convert PreQ1 to queuine (Q), resulting in the hypermodified nucleoside queuosine (7-(((4,5-cis-dihydroxy-2-cyclopenten-1-yl)amino)methyl)-7-deazaguanosine). The chain is Queuine tRNA-ribosyltransferase from Prochlorococcus marinus (strain SARG / CCMP1375 / SS120).